The chain runs to 446 residues: Adenylosuccinate synthetase (446 aa).

Residues 20–26 (GDEGKGK) and 48–50 (GHT) each bind GTP. The active-site Proton acceptor is Asp21. The Mg(2+) site is built by Asp21 and Gly48. Residues 21 to 24 (DEGK), 46 to 49 (NAGH), Thr137, Arg151, Gln232, Thr247, and Arg319 each bind IMP. The Proton donor role is filled by His49. Substrate is bound at residue 315 to 321 (SVTGRPR). GTP contacts are provided by residues Arg321, 347–349 (KLD), and 429–431 (STG).

The protein belongs to the adenylosuccinate synthetase family. As to quaternary structure, homodimer. Requires Mg(2+) as cofactor.

The protein localises to the cytoplasm. The catalysed reaction is IMP + L-aspartate + GTP = N(6)-(1,2-dicarboxyethyl)-AMP + GDP + phosphate + 2 H(+). The protein operates within purine metabolism; AMP biosynthesis via de novo pathway; AMP from IMP: step 1/2. Functionally, plays an important role in the de novo pathway of purine nucleotide biosynthesis. Catalyzes the first committed step in the biosynthesis of AMP from IMP. The sequence is that of Adenylosuccinate synthetase from Polynucleobacter asymbioticus (strain DSM 18221 / CIP 109841 / QLW-P1DMWA-1) (Polynucleobacter necessarius subsp. asymbioticus).